We begin with the raw amino-acid sequence, 282 residues long: Epoxide hydrolase LasB (282 aa).

The lsd19A stretch occupies residues methionine 1–alanine 133. A substrate-binding site is contributed by tyrosine 14. The active-site Proton acceptor; for 5-exo epoxide-opening cyclization activity is aspartate 38. Substrate is bound by residues glutamate 65 and histidine 146. The interval proline 134–alanine 282 is lsd19B. Aspartate 170 functions as the Proton acceptor; for 6-endo epoxide-opening cyclization activity in the catalytic mechanism. Substrate-binding residues include arginine 177, glutamate 197, and tyrosine 251.

Functionally, epoxide hydrolase responsible for the double epoxide-opening cyclization of bisepoxyprelasalocid A to form lasalocid A, a polyether antibiotic. In vitro, accepts various substrate analogs differing in the left segment of lasalocid and epoxide stereochemistry to afford products with excellent regioselectivity. In Streptomyces lasalocidi (Streptomyces lasaliensis), this protein is Epoxide hydrolase LasB (lsd19).